The following is a 99-amino-acid chain: uncharacterized protein (99 aa).

This is an uncharacterized protein from Vibrio alginolyticus.